The primary structure comprises 722 residues: Lysophospholipid acyltransferase 6 (722 aa).

A run of 5 helical transmembrane segments spans residues 25-45, 62-84, 104-123, 180-200, and 243-263; these read MVGL…ALFL, LRHT…QQAI, IVQR…VHLM, ALEY…PLVF, and KVVG…IYPV. Catalysis depends on residues N349 and H381. The next 3 helical transmembrane spans lie at 378–398, 424–444, and 452–472; these read AVWH…AVVV, ILTC…FVLL, and LYLR…FILP. Polar residues-rich tracts occupy residues 485 to 511 and 549 to 570; these read NGNG…STAA and VEQP…QQQP. Disordered stretches follow at residues 485–582 and 650–687; these read NGNG…PTCA and NGAI…DLHP.

The protein belongs to the membrane-bound acyltransferase family.

It localises to the endoplasmic reticulum. The protein resides in the membrane. It catalyses the reaction a 1-acyl-sn-glycero-3-phospho-L-serine + an acyl-CoA = a 1,2-diacyl-sn-glycero-3-phospho-L-serine + CoA. The enzyme catalyses 1-(9Z-octadecenoyl)-sn-glycero-3-phospho-L-serine + (9Z)-hexadecenoyl-CoA = 1-(9Z-octadecenoyl)-2-(9Z-hexadecenoyl)-sn-glycero-3-phospho-L-serine + CoA. It carries out the reaction 1-(9Z-octadecenoyl)-sn-glycero-3-phospho-L-serine + (9Z)-octadecenoyl-CoA = 1,2-di-(9Z)-octadecenoyl-sn-glycero-3-phospho-L-serine + CoA. The catalysed reaction is a 1-acyl-sn-glycero-3-phosphocholine + an acyl-CoA = a 1,2-diacyl-sn-glycero-3-phosphocholine + CoA. It catalyses the reaction 1-hexadecanoyl-sn-glycero-3-phosphocholine + (9Z)-octadecenoyl-CoA = 1-hexadecanoyl-2-(9Z-octadecenoyl)-sn-glycero-3-phosphocholine + CoA. The enzyme catalyses (9Z)-hexadecenoyl-CoA + 1-hexadecanoyl-sn-glycero-3-phosphocholine = 1-hexadecanoyl-2-(9Z-hexadecenoyl)-sn-glycero-3-phosphocholine + CoA. It carries out the reaction a 1-acyl-sn-glycero-3-phosphoethanolamine + an acyl-CoA = a 1,2-diacyl-sn-glycero-3-phosphoethanolamine + CoA. The catalysed reaction is 1-hexadecanoyl-sn-glycero-3-phosphoethanolamine + (9Z)-octadecenoyl-CoA = 1-hexadecanoyl-2-(9Z-octadecenoyl)-sn-glycero-3-phosphoethanolamine + CoA. It catalyses the reaction 1-hexadecanoyl-sn-glycero-3-phosphoethanolamine + (9Z,12Z)-octadecadienoyl-CoA = 1-hexadecanoyl-2-(9Z,12Z-octadecadienoyl)-sn-glycero-3-phosphoethanolamine + CoA. The enzyme catalyses 1-hexadecanoyl-sn-glycero-3-phosphoethanolamine + (9Z)-hexadecenoyl-CoA = 1-hexadecanoyl-2-(9Z)-hexadecenoyl-sn-glycero-3-phosphoethanolamine + CoA. It carries out the reaction 1-(9Z-octadecenoyl)-sn-glycero-3-phospho-(1'-sn-glycerol) + (9Z)-octadecenoyl-CoA = 1,2-di-(9Z-octadecenoyl)-sn-glycero-3-phospho-(1'-sn-glycerol) + CoA. Its pathway is lipid metabolism; phospholipid metabolism. In terms of biological role, acyltransferase with broad-specificity, that mediates the acylation of lysophospholipids to produce phospholipids (glycerophospholipids). Converts lysophosphatidylserine (1-acyl-2-hydroxy-sn-glycero-3-phospho-L-serine or LPS) to phosphatidylserine (1,2-diacyl-sn-glycero-3-phospho-L-serine or PS) (LPSAT activity), lysophosphatidylcholine (1-acyl-sn-glycero-3-phosphocholine or LPC) to phosphatidylcholine (1,2-diacyl-sn-glycero-3-phosphocholine or PC) (LPCAT activity), also lysophosphatidylethanolamine (1-acyl-sn-glycero-3-phosphochethanolamine or LPE) to phosphatidylchethanolamine (LPEAT activity) and lysophosphatidylglycerol (1-acyl-2-hydroxy-sn-glycero-3-phospho-(1'-sn-glycerol) or LPG) to phosphatidylglycerol (1,2-diacyl-sn-glycero-3-phospho-(1'-sn-glycerol) or PG) (LPGAT activity). Has a preference for unsaturated fatty acids of at least 16 carbons such as oleoyl-CoA ((9Z)-octadecenoyl-CoA) and palmitoleoyl-CoA ((9Z)-hexadecenoyl-CoA). Glycerophospholipids are important structural and functional components of cellular membrane, acyl-chain remodeling regulates the molecular species distribution of glycerophospholipids which can affect membrane fluidity and curvature. Essential for fertility and viability together with Nessy protein (Nes). This chain is Lysophospholipid acyltransferase 6, found in Drosophila melanogaster (Fruit fly).